A 150-amino-acid chain; its full sequence is Cytochrome b5 type B (150 aa).

A propeptide spanning residues 1 to 15 (MSGSMATAEASGSDG) is cleaved from the precursor. Positions 1–21 (MSGSMATAEASGSDGKGQEVE) are disordered. Phosphoserine is present on serine 23. In terms of domain architecture, Cytochrome b5 heme-binding spans 24 to 100 (VTYYRMEEVA…LKQYYIGDIH (77 aa)). Residue lysine 34 is modified to N6-acetyllysine. At serine 37 the chain carries Phosphoserine. At lysine 39 the chain carries N6-methyllysine. Histidine 59 and histidine 83 together coordinate heme. Phosphoserine is present on serine 84. Residues 122–144 (CWAYWILPIIGAVLLGFLYRYYT) form a helical membrane-spanning segment.

Belongs to the cytochrome b5 family. In terms of assembly, component of a complex composed of cytochrome b5, NADH-cytochrome b5 reductase (CYB5R3) and MTARC2.

Its subcellular location is the mitochondrion outer membrane. Its function is as follows. Cytochrome b5 is a membrane-bound hemoprotein functioning as an electron carrier for several membrane-bound oxygenases. This chain is Cytochrome b5 type B (CYB5B), found in Pongo abelii (Sumatran orangutan).